The sequence spans 133 residues: Ribonuclease P protein component (133 aa).

Belongs to the RnpA family. Consists of a catalytic RNA component (M1 or rnpB) and a protein subunit.

The catalysed reaction is Endonucleolytic cleavage of RNA, removing 5'-extranucleotides from tRNA precursor.. In terms of biological role, RNaseP catalyzes the removal of the 5'-leader sequence from pre-tRNA to produce the mature 5'-terminus. It can also cleave other RNA substrates such as 4.5S RNA. The protein component plays an auxiliary but essential role in vivo by binding to the 5'-leader sequence and broadening the substrate specificity of the ribozyme. This is Ribonuclease P protein component from Paramagnetospirillum magneticum (strain ATCC 700264 / AMB-1) (Magnetospirillum magneticum).